A 300-amino-acid polypeptide reads, in one-letter code: RNA polymerase sigma factor RpoH (300 aa).

The segment at 53–122 (LVTSHLRLVA…IQEYILRSWS (70 aa)) is sigma-70 factor domain-2. The Interaction with polymerase core subunit RpoC signature appears at 77–80 (EVVS). Residues 231–282 (AMGVLNDRERRIFEARRLAEDPVTLEELSSEFDISRERVRQIEVRAFEKVQE) are sigma-70 factor domain-4. A DNA-binding region (H-T-H motif) is located at residues 255–274 (LEELSSEFDISRERVRQIEV).

The protein belongs to the sigma-70 factor family. RpoH subfamily. As to quaternary structure, interacts with the RNA polymerase core enzyme.

The protein localises to the cytoplasm. In terms of biological role, sigma factors are initiation factors that promote the attachment of RNA polymerase to specific initiation sites and are then released. This sigma factor is involved in regulation of expression of heat shock genes. The chain is RNA polymerase sigma factor RpoH from Rhizobium radiobacter (Agrobacterium tumefaciens).